The chain runs to 283 residues: Biotin synthase (283 aa).

A Radical SAM core domain is found at 3–232 (KISNEIFLCS…NTRLMIAGGR (230 aa)). [4Fe-4S] cluster contacts are provided by cysteine 21, cysteine 25, and cysteine 28. 3 residues coordinate [2Fe-2S] cluster: cysteine 65, cysteine 100, and arginine 225.

It belongs to the radical SAM superfamily. Biotin synthase family. In terms of assembly, homodimer. The cofactor is [4Fe-4S] cluster. It depends on [2Fe-2S] cluster as a cofactor.

The enzyme catalyses (4R,5S)-dethiobiotin + (sulfur carrier)-SH + 2 reduced [2Fe-2S]-[ferredoxin] + 2 S-adenosyl-L-methionine = (sulfur carrier)-H + biotin + 2 5'-deoxyadenosine + 2 L-methionine + 2 oxidized [2Fe-2S]-[ferredoxin]. The protein operates within cofactor biosynthesis; biotin biosynthesis; biotin from 7,8-diaminononanoate: step 2/2. Its function is as follows. Catalyzes the conversion of dethiobiotin (DTB) to biotin by the insertion of a sulfur atom into dethiobiotin via a radical-based mechanism. This is Biotin synthase from Helicobacter hepaticus (strain ATCC 51449 / 3B1).